Here is a 169-residue protein sequence, read N- to C-terminus: Peptide deformylase (169 aa).

Residues C94 and H136 each contribute to the Fe cation site. E137 is a catalytic residue. H140 is a Fe cation binding site.

The protein belongs to the polypeptide deformylase family. Fe(2+) is required as a cofactor.

It catalyses the reaction N-terminal N-formyl-L-methionyl-[peptide] + H2O = N-terminal L-methionyl-[peptide] + formate. Its function is as follows. Removes the formyl group from the N-terminal Met of newly synthesized proteins. Requires at least a dipeptide for an efficient rate of reaction. N-terminal L-methionine is a prerequisite for activity but the enzyme has broad specificity at other positions. This chain is Peptide deformylase, found in Desulfotalea psychrophila (strain LSv54 / DSM 12343).